A 536-amino-acid polypeptide reads, in one-letter code: Pre-mRNA 3'-end-processing factor FIP1 (536 aa).

Composition is skewed to basic and acidic residues over residues 1–10 (MSAGEVERLV) and 32–42 (VHVHSDLAKDL). Disordered regions lie at residues 1-95 (MSAG…EDDV), 212-246 (VQQGRTGNSEKEAALPSTKAEFTSPPSLFKTGLPP), and 300-536 (FPPG…APAE). Residues 1–110 (MSAGEVERLV…DIKTGAPQYG (110 aa)) form a sufficient for interaction with PAPOLA region. Residues 1–296 (MSAGEVERLV…TEVDNNFSKP (296 aa)) are necessary for stimulating PAPOLA activity. Acidic residues-rich tracts occupy residues 43 to 54 (DENEVERPEEEN) and 80 to 94 (TEDDSDSDSDDDEDD). 3 positions are modified to phosphoserine: Ser84, Ser86, and Ser88. The tract at residues 136–219 (KGVDLDAPGS…ITVQQGRTGN (84 aa)) is sufficient for interaction with CPSF4. Pro residues predominate over residues 300–344 (FPPGAPPTHLPPPPFLPPPPTVSTAPPLIPPPGFPPPPGAPPPSL). Phosphotyrosine is present on Tyr366. The segment covering 374–390 (LTSSAPSWPSLVDTTKQ) has biased composition (polar residues). The segment at 383 to 536 (SLVDTTKQWD…QESTEAAPAE (154 aa)) is sufficient for interaction with CPSF1 and CSTF3. Residues 394–434 (YARREKDRDRDRERDRDRERERDRDRERERTRERERERDHS) are compositionally biased toward basic and acidic residues. The interval 397-432 (REKDRDRDRERDRDRERERDRDRERERTRERERERD) is arg/Asp/Glu-rich domain. Ser434 carries the phosphoserine modification. Phosphothreonine is present on Thr436. 2 positions are modified to phosphoserine: Ser438 and Ser442. The span at 443 to 470 (DEERYRYREYAERGYERHRASREKEERH) shows a compositional bias: basic and acidic residues. Over residues 484–493 (KSSRSNSRRR) the composition is skewed to basic residues. Phosphoserine is present on Ser496. Residues 502 to 512 (HRRHKHKKSKR) are compositionally biased toward basic residues.

Belongs to the FIP1 family. Component of the cleavage and polyadenylation specificity factor (CPSF) complex, composed of CPSF1, CPSF2, CPSF3, CPSF4 and FIP1L1. Found in a complex with CPSF1, FIP1L1 and PAPOLA. Interacts with CPSF1, CPSF4, CSTF2 and CSTF3. Interacts with AHCYL1 (when phosphorylated); the interaction is direct and associates AHCYL1 with the CPSF complex and RNA. Interacts with PAPOLA; the interaction seems to be increased by the interaction with AHCYL1. Interacts with NUDT21/CPSF5; this interaction occurs in a RNA sequence-specific manner. Interacts (preferentially via unphosphorylated form and Arg/Glu/Asp-rich domain) with CPSF6 (via Arg/Ser-rich domain); this interaction mediates, at least in part, the interaction between the CFIm and CPSF complexes and may be inhibited by CPSF6 hyper-phosphorylation. Interacts (preferentially via unphosphorylated form and Arg/Asp/Glu-rich domain) with CPSF7 (via Arg/Ser-rich domain); this interaction mediates, at least in part, the interaction between the CFIm and CPSF complexes and may be inhibited by CPSF7 hyper-phosphorylation.

Its subcellular location is the nucleus. Functionally, component of the cleavage and polyadenylation specificity factor (CPSF) complex that plays a key role in pre-mRNA 3'-end formation, recognizing the AAUAAA signal sequence and interacting with poly(A) polymerase and other factors to bring about cleavage and poly(A) addition. FIP1L1 contributes to poly(A) site recognition and stimulates poly(A) addition. Binds to U-rich RNA sequence elements surrounding the poly(A) site. May act to tether poly(A) polymerase to the CPSF complex. The sequence is that of Pre-mRNA 3'-end-processing factor FIP1 (Fip1l1) from Rattus norvegicus (Rat).